A 74-amino-acid polypeptide reads, in one-letter code: Conotoxin AbVIA (74 aa).

The N-terminal stretch at Val-1–Ala-17 is a signal peptide. Residues Val-18–Lys-38 constitute a propeptide that is removed on maturation. 3 cysteine pairs are disulfide-bonded: Cys-43/Cys-57, Cys-50/Cys-61, and Cys-56/Cys-68. Ser-73 is modified (serine amide).

It belongs to the conotoxin O1 superfamily. In terms of tissue distribution, expressed by the venom duct.

Its subcellular location is the secreted. The sequence is that of Conotoxin AbVIA from Conus abbreviatus (Abbreviated cone).